The chain runs to 395 residues: Probable eukaryotic translation initiation factor 5 (395 aa).

28–35 (GKGNGIKT) serves as a coordination point for GTP. Disordered regions lie at residues 146 to 171 (PPAK…AEDE) and 374 to 395 (LAEA…DDDE). The span at 147 to 157 (PAKKKSHKHKR) shows a compositional bias: basic residues. 2 stretches are compositionally biased toward acidic residues: residues 161–170 (VAEEEDGAED) and 377–395 (ASDE…DDDE). In terms of domain architecture, W2 spans 228 to 384 (EEAESSRYDQ…AEASDESESE (157 aa)).

It belongs to the eIF-2-beta/eIF-5 family. As to quaternary structure, monomer.

In terms of biological role, catalyzes the hydrolysis of GTP bound to the 40S ribosomal initiation complex (40S.mRNA.Met-tRNA[F].eIF-2.GTP) with the subsequent joining of a 60S ribosomal subunit resulting in the release of eIF-2 and the guanine nucleotide. The subsequent joining of a 60S ribosomal subunit results in the formation of a functional 80S initiation complex (80S.mRNA.Met-tRNA[F]). This is Probable eukaryotic translation initiation factor 5 (tif5) from Schizosaccharomyces pombe (strain 972 / ATCC 24843) (Fission yeast).